The primary structure comprises 308 residues: Phosphoribosylaminoimidazole-succinocarboxamide synthase (308 aa).

It belongs to the SAICAR synthetase family.

It carries out the reaction 5-amino-1-(5-phospho-D-ribosyl)imidazole-4-carboxylate + L-aspartate + ATP = (2S)-2-[5-amino-1-(5-phospho-beta-D-ribosyl)imidazole-4-carboxamido]succinate + ADP + phosphate + 2 H(+). Its pathway is purine metabolism; IMP biosynthesis via de novo pathway; 5-amino-1-(5-phospho-D-ribosyl)imidazole-4-carboxamide from 5-amino-1-(5-phospho-D-ribosyl)imidazole-4-carboxylate: step 1/2. The protein is Phosphoribosylaminoimidazole-succinocarboxamide synthase of Stenotrophomonas maltophilia (strain R551-3).